The primary structure comprises 217 residues: 3-demethoxyubiquinol 3-hydroxylase (217 aa).

Positions 66, 96, 99, 148, 180, and 183 each coordinate Fe cation.

Belongs to the COQ7 family. Fe cation is required as a cofactor.

The protein localises to the cell membrane. It catalyses the reaction a 5-methoxy-2-methyl-3-(all-trans-polyprenyl)benzene-1,4-diol + AH2 + O2 = a 3-demethylubiquinol + A + H2O. The protein operates within cofactor biosynthesis; ubiquinone biosynthesis. Functionally, catalyzes the hydroxylation of 2-nonaprenyl-3-methyl-6-methoxy-1,4-benzoquinol during ubiquinone biosynthesis. In Xanthomonas euvesicatoria pv. vesicatoria (strain 85-10) (Xanthomonas campestris pv. vesicatoria), this protein is 3-demethoxyubiquinol 3-hydroxylase.